The following is a 411-amino-acid chain: LL-diaminopimelate aminotransferase (411 aa).

Residues Y15 and G42 each contribute to the substrate site. Residues Y72, 108-109, Y132, N187, Y218, and 246-248 each bind pyridoxal 5'-phosphate; these read SK and SFS. Residues K109, Y132, and N187 each contribute to the substrate site. K249 carries the post-translational modification N6-(pyridoxal phosphate)lysine. Pyridoxal 5'-phosphate is bound by residues R257 and N292. Substrate contacts are provided by N292 and R388.

It belongs to the class-I pyridoxal-phosphate-dependent aminotransferase family. LL-diaminopimelate aminotransferase subfamily. Homodimer. The cofactor is pyridoxal 5'-phosphate.

The enzyme catalyses (2S,6S)-2,6-diaminopimelate + 2-oxoglutarate = (S)-2,3,4,5-tetrahydrodipicolinate + L-glutamate + H2O + H(+). It functions in the pathway amino-acid biosynthesis; L-lysine biosynthesis via DAP pathway; LL-2,6-diaminopimelate from (S)-tetrahydrodipicolinate (aminotransferase route): step 1/1. Its function is as follows. Involved in the synthesis of meso-diaminopimelate (m-DAP or DL-DAP), required for both lysine and peptidoglycan biosynthesis. Catalyzes the direct conversion of tetrahydrodipicolinate to LL-diaminopimelate. In Citrifermentans bemidjiense (strain ATCC BAA-1014 / DSM 16622 / JCM 12645 / Bem) (Geobacter bemidjiensis), this protein is LL-diaminopimelate aminotransferase.